The primary structure comprises 193 residues: Signal peptidase I T (193 aa).

Topologically, residues 1–25 (MTEEKNTNTEKTAKKKTNTYLEWGK) are cytoplasmic. Residues 26–42 (AIVIAVLLALLIRHFLF) traverse the membrane as a helical segment. Topologically, residues 43–193 (EPYLVEGSSM…FPFNEMRQTK (151 aa)) are extracellular. Residues serine 51 and lysine 93 contribute to the active site.

This sequence belongs to the peptidase S26 family.

It is found in the cell membrane. It carries out the reaction Cleavage of hydrophobic, N-terminal signal or leader sequences from secreted and periplasmic proteins.. The protein is Signal peptidase I T (sipT) of Bacillus subtilis (strain 168).